Consider the following 246-residue polypeptide: ATP synthase subunit a, chloroplastic (246 aa).

A run of 5 helical transmembrane segments spans residues 35 to 55 (AQVLITSWIVIGLILGLTFLA), 94 to 114 (IPFIGTMFLFIFVSNWSGALI), 132 to 152 (DINTTVALALLTSVAYFYAGL), 198 to 218 (LVVAVLVSLVPLVVPIPMMFL), and 219 to 239 (GLFTSAIQALIFATLAAAYIG).

This sequence belongs to the ATPase A chain family. In terms of assembly, F-type ATPases have 2 components, CF(1) - the catalytic core - and CF(0) - the membrane proton channel. CF(1) has five subunits: alpha(3), beta(3), gamma(1), delta(1), epsilon(1). CF(0) has four main subunits: a, b, b' and c.

It localises to the plastid. It is found in the chloroplast thylakoid membrane. Its function is as follows. Key component of the proton channel; it plays a direct role in the translocation of protons across the membrane. This Chara vulgaris (Common stonewort) protein is ATP synthase subunit a, chloroplastic.